Consider the following 2058-residue polypeptide: Protein Daple (2058 aa).

In terms of domain architecture, Calponin-homology (CH) spans 11–131 (HFLESPLVTW…KILLLMLGCA (121 aa)). Coiled coils occupy residues 195–221 (HLKR…DYLQ), 247–428 (EDKK…SMNE), 455–1016 (ELNE…LRGA), 1043–1082 (ELLK…NLNL), and 1108–1388 (ANLQ…KFYD). Disordered regions lie at residues 1406–1444 (LIKP…MRPL), 1480–1592 (HRMS…EDMI), 1617–1655 (TKNR…PGSE), 1696–1724 (LHPS…LPSA), 1831–1857 (YSAT…RGNS), 1940–1959 (LALP…ASSL), and 1988–2051 (PVRP…PQTV). The span at 1409–1418 (PKKEPSRESV) shows a compositional bias: basic and acidic residues. Residues 1419–1429 (KSPTDVQSKTM) show a composition bias toward polar residues. The span at 1494–1506 (GPEHLSRSRRMES) shows a compositional bias: basic and acidic residues. Residues 1552–1577 (NAGSSRVPWTSSLEVSRSASNSSSPL) show a composition bias toward polar residues. 2 consecutive short sequence motifs (GBA) follow at residues 1653 to 1675 (GSEM…PSRR) and 1676 to 1697 (HSLN…ETLH). A compositionally biased stretch (polar residues) spans 1831–1841 (YSATSSSQSPE). Positions 2039–2048 (PASPDPSADP) are enriched in low complexity. Positions 2055 to 2058 (YGCV) match the PDZ-binding motif.

This sequence belongs to the CCDC88 family. In terms of assembly, interacts with dvl2/dsh via the PDZ-binding motif. As to expression, expressed weakly in gastrulae, with slightly stronger expression in the dorsal region. In neurulae, expressed in the neural plate with strong expression in the presumptive mesencephalic region. At the tailbud stage, expressed in somatic cells and in part of the tail. Also strongly expressed in regions of the head including eye vesicles, otic vesicles, olfactory placode and the pharyngeal cavity.

It is found in the cytoplasm. The protein resides in the cell junction. Its function is as follows. Positive regulator of Wnt signaling, acting synergistically with dvl2/dsh. Functions upstream of ctnnb1/beta-catenin in the canonical Wnt pathway, and also activates jnk in the Wnt/planar cell polarity (PCP) pathway. Acts as a non-receptor guanine nucleotide exchange factor which binds to and activates guanine nucleotide-binding protein G(i) alpha subunits. This promotes apical cell constriction and subsequent bending of the neural plate during neurulation via arhgef18. This is Protein Daple (ccdc88c) from Xenopus laevis (African clawed frog).